The following is a 272-amino-acid chain: Rhomboid-type serine protease B (272 aa).

A run of 6 helical transmembrane segments spans residues 30–50, 72–92, 103–123, 133–153, 164–184, and 186–206; these read LVLL…WSVV, PFIH…TPLL, TAVA…YILV, AVVG…IKTF, TKIP…IFVP, and TSFL…LGYL. Ser138 (nucleophile) is an active-site residue. The active site involves His191.

It belongs to the peptidase S54 family.

The protein localises to the membrane. The catalysed reaction is Cleaves type-1 transmembrane domains using a catalytic dyad composed of serine and histidine that are contributed by different transmembrane domains.. In terms of biological role, rhomboid protease that catalyzes intramembrane proteolysis. Required for transcription factor srbA activation by mediating its release from the membrane and thereby regulating its activity under hypoxic conditions. Essential for iron homeostasis and resistance to azoles such as voriconazole. Required for virulence in murine models of invasive pulmonary aspergillosis (IPA). This chain is Rhomboid-type serine protease B, found in Aspergillus fumigatus (strain ATCC MYA-4609 / CBS 101355 / FGSC A1100 / Af293) (Neosartorya fumigata).